The chain runs to 327 residues: Glutaminase 1 (327 aa).

Residues S74, N126, E170, N177, Y201, Y253, and V271 each contribute to the substrate site.

This sequence belongs to the glutaminase family. In terms of assembly, homotetramer.

It carries out the reaction L-glutamine + H2O = L-glutamate + NH4(+). The polypeptide is Glutaminase 1 (glsA1) (Bacillus subtilis (strain 168)).